The primary structure comprises 856 residues: MASSGSIQIPRRLPLLLTHEGVLLPGSTMRTSVDTPGNMELVQNRLLRGTSLKSTIIGVVPNTSDPSSDREELPSLHRIGTAALAVQVVGSNWPKPHYTLLVTGLCRFQITEILKERPYPVAEVEQLDRLEQLSSKEEFKEALGDLSEQFYKYAVQLVDMLDNSVPAVAKLKRLLNNLPKELLPDVLTSIIRTTNEEKLQILDAVSLEERFKVTIPLLLRQIEGLKLLQKTRNPKQDDDKRIVAIRPPRKLGNISSKSFSLENTDDDDEDSDDIIILERKIKSSNMPEPALKVCVKEIKRLKKMPQSMPEYALTRNYLELMSELPWSKTTRDRLDIRAARILLDNDHYAMAKLKKRVLEYLAVRQLKNNLKGPILCFVGPPGVGKTSVGRSIAKTLGREFHRIALGGVCDQSDIRGHRRTYVGSMPGRIINGLKIVGVNNPVFLLDEVDKLGKSLQGDPAAALLEVLDPEQNHNFTDHYLNVAFDLSQVLFIATANTTATIPPALLDRMEVLEVPGYSQEEKLEIAHRHLISKQLAQHGLTPEQIQIPQEATLEIITRYTREAGVRSLDRKLGAICRAVAVKVAEGQHREHKSEHLEAPEGEERKESVPEGSKSATINDTADFALPPEMPILIDHHALKDILGPPMYETEVFGRLNQPGVAIGLAWTPLGGEIMFVEASRMDGEGQLTLTGQLGDVMKESAHLAISWLRSNAKKYQLTNASGSFDLLDNTDIHLHFPAGAVTKDGPSAGVAIVTCLASLFSGRLVCSDVAMTGEITLRGLVLPVGGIKDKVLAAHRAGLKRVILPKRNETDLEEIPLNVRQDLEFVLAGSLDEVLNAAFDGGFSLKTTPDLLNSKL.

The 210-residue stretch at 13–222 (LPLLLTHEGV…VTIPLLLRQI (210 aa)) folds into the Lon N-terminal domain. An ATP-binding site is contributed by 379–386 (GPPGVGKT). The span at 586-608 (GQHREHKSEHLEAPEGEERKESV) shows a compositional bias: basic and acidic residues. The tract at residues 586 to 614 (GQHREHKSEHLEAPEGEERKESVPEGSKS) is disordered. One can recognise a Lon proteolytic domain in the interval 655-841 (LNQPGVAIGL…DEVLNAAFDG (187 aa)). Catalysis depends on residues serine 747 and lysine 790. Residues 854–856 (SKL) carry the Microbody targeting signal motif.

The protein belongs to the peptidase S16 family.

It localises to the peroxisome matrix. It carries out the reaction Hydrolysis of proteins in presence of ATP.. In terms of biological role, ATP-dependent serine protease that mediates the selective degradation of misfolded and unassembled polypeptides in the peroxisomal matrix. Necessary for type 2 peroxisome targeting signal (PTS2)-containing protein processing and facilitates peroxisome matrix protein import. In Xenopus laevis (African clawed frog), this protein is Lon protease homolog 2, peroxisomal (lonp2).